Reading from the N-terminus, the 324-residue chain is Phosphomevalonate decarboxylase (324 aa).

It belongs to the phosphomevalonate decarboxylase family.

The catalysed reaction is (R)-5-phosphomevalonate + ATP = isopentenyl phosphate + ADP + phosphate + CO2. Is strongly inhibited by 6-fluoromevalonate monophosphate but shows negligible inhibition by 6-fluoromevalonate diphosphate (a potent inhibitor of the classical mevalonate pathway). Functionally, catalyzes the decarboxylation of mevalonate 5-phosphate (MVAP) to isopentenyl phosphate (IP). Functions in an alternate mevalonate (MVA) pathway leading to isopentenyl diphosphate (IPP), a key precursor for the biosynthesis of isoprenoid compounds such as archaeal membrane lipids. This is Phosphomevalonate decarboxylase (mvaD) from Haloferax volcanii (strain ATCC 29605 / DSM 3757 / JCM 8879 / NBRC 14742 / NCIMB 2012 / VKM B-1768 / DS2) (Halobacterium volcanii).